Consider the following 197-residue polypeptide: MALQQIVEQTVAGLGYDLVEIERSAGGLLRITIDLVWVPPTDEVSAAVGVEQFITVEDCEKVTRQLQFALEVEGVDYTRLEVSSPGIDRLLRNEADFKRFEGEVIDITLKQPMGAAAGGQVHANRKKFRGTLERADSGGWQIVWSDEPPVKPGQRISKKRVPAPLQALGFTLDELREARLAPIVDFKGRGTKPGEPG.

It belongs to the RimP family.

It localises to the cytoplasm. Required for maturation of 30S ribosomal subunits. This chain is Ribosome maturation factor RimP, found in Acidovorax ebreus (strain TPSY) (Diaphorobacter sp. (strain TPSY)).